A 370-amino-acid chain; its full sequence is MSQDYYQVLGVSKTASQADIKKAYLKLAKQYHPDTTNANDAEKKFKEINAAYDVLKDEQKRAAYDRFGHDAFQSQQARGGGNNGSFHPDINDIFGDFFSDFMGSGRRKQTSSKIRGSDLKYDLTIKLEEAFHGIEKNISFSSEVKCDTCHGTGSEKGETITTCDACGGVGATRIQQGFFTLEQTCHKCQGNGQIIKNPCKKCHGMGRYHKQRNLSINIPAGVENGTRIRHTGEGEAGIRGGNNGDLYVDIAIKPHDIYKVDGANLHCKLPISFVHAALGGEIEVPVIEGGKVKLTIPAGTQNGDQLRLRSKGMSKVRSTIRGDMLTHIHVEVPKNLSKKQRELLEEFKKESINEKENDSSFFNKMKSMWS.

In terms of domain architecture, J spans 4–68 (DYYQVLGVSK…QKRAAYDRFG (65 aa)). A CR-type zinc finger spans residues 133–211 (GIEKNISFSS…CHGMGRYHKQ (79 aa)). Positions 146, 149, 163, 166, 185, 188, 199, and 202 each coordinate Zn(2+). CXXCXGXG motif repeat units follow at residues 146-153 (CDTCHGTG), 163-170 (CDACGGVG), 185-192 (CHKCQGNG), and 199-206 (CKKCHGMG).

This sequence belongs to the DnaJ family. Homodimer. The cofactor is Zn(2+).

The protein localises to the cytoplasm. Its function is as follows. Participates actively in the response to hyperosmotic and heat shock by preventing the aggregation of stress-denatured proteins and by disaggregating proteins, also in an autonomous, DnaK-independent fashion. Unfolded proteins bind initially to DnaJ; upon interaction with the DnaJ-bound protein, DnaK hydrolyzes its bound ATP, resulting in the formation of a stable complex. GrpE releases ADP from DnaK; ATP binding to DnaK triggers the release of the substrate protein, thus completing the reaction cycle. Several rounds of ATP-dependent interactions between DnaJ, DnaK and GrpE are required for fully efficient folding. Also involved, together with DnaK and GrpE, in the DNA replication of plasmids through activation of initiation proteins. The protein is Chaperone protein DnaJ of Rickettsia prowazekii (strain Madrid E).